Consider the following 327-residue polypeptide: Elongation factor P--(R)-beta-lysine ligase (327 aa).

78-80 contributes to the substrate binding site; that stretch reads SPE. ATP is bound by residues 102–104 and N111; that span reads RNQ. Y120 is a binding site for substrate. Position 246–247 (246–247) interacts with ATP; that stretch reads EL. Substrate is bound at residue E253. G302 contributes to the ATP binding site.

This sequence belongs to the class-II aminoacyl-tRNA synthetase family. EpmA subfamily. Homodimer.

The enzyme catalyses D-beta-lysine + L-lysyl-[protein] + ATP = N(6)-((3R)-3,6-diaminohexanoyl)-L-lysyl-[protein] + AMP + diphosphate + H(+). With EpmB is involved in the beta-lysylation step of the post-translational modification of translation elongation factor P (EF-P). Catalyzes the ATP-dependent activation of (R)-beta-lysine produced by EpmB, forming a lysyl-adenylate, from which the beta-lysyl moiety is then transferred to the epsilon-amino group of a conserved specific lysine residue in EF-P. The protein is Elongation factor P--(R)-beta-lysine ligase of Baumannia cicadellinicola subsp. Homalodisca coagulata.